The primary structure comprises 426 residues: Glutamyl-tRNA reductase (426 aa).

Substrate is bound by residues 49–52 (TCNR), serine 109, 114–116 (EGQ), and glutamine 120. Cysteine 50 acts as the Nucleophile in catalysis. 189–194 (GAGETG) is a binding site for NADP(+).

It belongs to the glutamyl-tRNA reductase family. In terms of assembly, homodimer.

The catalysed reaction is (S)-4-amino-5-oxopentanoate + tRNA(Glu) + NADP(+) = L-glutamyl-tRNA(Glu) + NADPH + H(+). It participates in porphyrin-containing compound metabolism; protoporphyrin-IX biosynthesis; 5-aminolevulinate from L-glutamyl-tRNA(Glu): step 1/2. Its pathway is porphyrin-containing compound metabolism; chlorophyll biosynthesis. Functionally, catalyzes the NADPH-dependent reduction of glutamyl-tRNA(Glu) to glutamate 1-semialdehyde (GSA). In Chlorobium chlorochromatii (strain CaD3), this protein is Glutamyl-tRNA reductase.